Reading from the N-terminus, the 607-residue chain is Guanine nucleotide-binding protein-like 1 (607 aa).

Residues 1–14 (MPRKKPFSVKQKKK) are compositionally biased toward basic residues. Residues 1–81 (MPRKKPFSVK…GPRGYDPNRY (81 aa)) form a disordered region. Residues 15 to 26 (QLQDKRERKRGL) are compositionally biased toward basic and acidic residues. 3 positions are modified to phosphoserine: Ser-32, Ser-33, and Ser-34. Thr-48 and Thr-50 each carry phosphothreonine. Residues Ser-51 and Ser-68 each carry the phosphoserine modification. The 241-residue stretch at 178–418 (WRQLWRVLEM…LCDCPGLIFP (241 aa)) folds into the CP-type G domain. 225 to 228 (NKVD) lines the GTP pocket. Ser-324 bears the Phosphoserine mark. Residues 367–374 (GFPNVGKS) and 411–415 (DCPGL) contribute to the GTP site. The segment at 547–607 (GPAGDEEEEE…PYALLGEDEC (61 aa)) is disordered. The segment covering 550-584 (GDEEEEEEEELSSSCEEEGEEDRDADEEGEGDEDT) has biased composition (acidic residues). Residues Ser-561, Ser-562, and Ser-563 each carry the phosphoserine modification.

Belongs to the TRAFAC class YlqF/YawG GTPase family.

Functionally, possible regulatory or functional link with the histocompatibility cluster. The sequence is that of Guanine nucleotide-binding protein-like 1 (GNL1) from Macaca fascicularis (Crab-eating macaque).